The sequence spans 318 residues: Pantothenate kinase (318 aa).

An ATP-binding site is contributed by 96-103; it reads GSVSVGKS.

Belongs to the prokaryotic pantothenate kinase family.

It localises to the cytoplasm. It catalyses the reaction (R)-pantothenate + ATP = (R)-4'-phosphopantothenate + ADP + H(+). The protein operates within cofactor biosynthesis; coenzyme A biosynthesis; CoA from (R)-pantothenate: step 1/5. The polypeptide is Pantothenate kinase (Bradyrhizobium sp. (strain BTAi1 / ATCC BAA-1182)).